The sequence spans 141 residues: MVKYPLILLLIGCAAAQEPRRDGEWPPPAILKLGKHFHDICAPKTGVTDEAIKEFSDGQIHEDEALKCYMNCLFHEFEVVDDNGDVHMEKVLNAIPGEKLRNIMMEASKGCIHPEGDTLCHKAWWFHQCWKKADPVHYFLV.

A signal peptide spans 1-16 (MVKYPLILLLIGCAAA). Disulfide bonds link cysteine 41-cysteine 72, cysteine 68-cysteine 120, and cysteine 111-cysteine 129.

Belongs to the PBP/GOBP family. In terms of tissue distribution, antenna. Mostly expressed in two types of sensory hairs, sensilla trichodea and small sensilla basiconica, in the ventro-lateral region of the third antennal segment (at protein level).

It is found in the secreted. This chain is Pheromone-binding protein-related protein 6 (Obp83b), found in Drosophila melanogaster (Fruit fly).